Consider the following 142-residue polypeptide: Mitochondrial import receptor subunit TOM22 homolog (142 aa).

Low complexity predominate over residues 1–18 (MAAAVAAAGAGEPLSPEE). The tract at residues 1–41 (MAAAVAAAGAGEPLSPEELLPKAEAEKAEEELEEDDDDELD) is disordered. Alanine 2 carries the N-acetylalanine modification. Residues 2–83 (AAAVAAAGAG…AQKMYRFSRA (82 aa)) lie on the Cytoplasmic side of the membrane. Serine 15 carries the post-translational modification Phosphoserine. Residues 27 to 41 (KAEEELEEDDDDELD) are compositionally biased toward acidic residues. The segment at 41-50 (DETLSERLWG) is import sequence; necessary for mitochondrion outer membrane localization and integration in the TOM complex. Threonine 43 carries the phosphothreonine modification. Position 45 is a phosphoserine (serine 45). The interval 83 to 103 (AALWIGTTSFMILVLPVVFET) is TMD; necessary for mitochondrion outer membrane localization and integration in the TOM complex. A helical transmembrane segment spans residues 84–103 (ALWIGTTSFMILVLPVVFET). Topologically, residues 104 to 142 (EKLQMEQQQQLQQRQILLGPNTGLSGGMPGALPPLPGKM) are mitochondrial intermembrane. Positions 123 to 142 (PNTGLSGGMPGALPPLPGKM) are C-tail signal; necessary for mitochondrion outer membrane localization and integration in the TOM complex.

It belongs to the Tom22 family. Forms part of the preprotein translocase complex of the outer mitochondrial membrane (TOM complex) which consists of at least 7 different proteins (TOMM5, TOMM6, TOMM7, TOMM20, TOMM22, TOMM40 and TOMM70). Interacts with PPP2R2B and TOMM40.

The protein resides in the mitochondrion outer membrane. Central receptor component of the translocase of the outer membrane of mitochondria (TOM complex) responsible for the recognition and translocation of cytosolically synthesized mitochondrial preproteins. Together with the peripheral receptor TOM20 functions as the transit peptide receptor and facilitates the movement of preproteins into the translocation pore. Required for the translocation across the mitochondrial outer membrane of cytochrome P450 monooxygenases. This is Mitochondrial import receptor subunit TOM22 homolog (Tomm22) from Mus musculus (Mouse).